A 4450-amino-acid chain; its full sequence is Gramicidin S synthase 2 (4450 aa).

Positions 467–1044 are domain 1 (proline-activating); that stretch reads DKTIHQLFTE…IQEISNYING (578 aa). Carrier domains follow at residues 971–1046, 2006–2081, 3051–3126, and 4089–4164; these read VPTN…NGAK, APSS…ADGE, APRT…EETD, and APRN…THQE. O-(pantetheine 4'-phosphoryl)serine occurs at positions 1006, 2041, 3086, and 4124. Residues 1521–2080 are domain 2 (valine-activating); sequence DHVAVGWKDQ…SALAQYIADG (560 aa). The interval 2538-3134 is domain 3 (ornithine-activating); it reads YATNKIFHEL…TDTEQYMAIQ (597 aa). The domain 4 (leucine-activating) stretch occupies residues 3590–4172; that stretch reads IQELFEEQVK…QESENNVHQP (583 aa).

It belongs to the ATP-dependent AMP-binding enzyme family. Large multienzyme complex of GrsA and GrsB. It depends on pantetheine 4'-phosphate as a cofactor.

It functions in the pathway antibiotic biosynthesis; gramicidin S biosynthesis. Functionally, this protein is a multifunctional enzyme, able to activate and polymerize the amino acids Pro, Val, Orn and Leu. Activation sites for these AA consist of individual domains. The protein is Gramicidin S synthase 2 (grsB) of Brevibacillus brevis (Bacillus brevis).